The sequence spans 299 residues: Very long chain fatty acid elongase 5 (299 aa).

An N-acetylmethionine modification is found at methionine 1. 7 helical membrane-spanning segments follow: residues tryptophan 26–valine 46, isoleucine 64–valine 84, valine 112–leucine 132, isoleucine 139–methionine 158, phenylalanine 168–serine 187, glycine 205–cysteine 225, and threonine 226–phenylalanine 246. A disordered region spans residues methionine 274–aspartate 299. A compositionally biased stretch (polar residues) spans glycine 279 to glutamate 288. At serine 285 the chain carries Phosphoserine.

The protein belongs to the ELO family. ELOVL5 subfamily. Interacts with TECR. As to expression, ubiquitous. Highly expressed in the adrenal gland and testis. Weakly expressed in prostate, lung and brain. Expressed in the cerebellum.

The protein resides in the endoplasmic reticulum membrane. Its subcellular location is the cell projection. It is found in the dendrite. The enzyme catalyses a very-long-chain acyl-CoA + malonyl-CoA + H(+) = a very-long-chain 3-oxoacyl-CoA + CO2 + CoA. It catalyses the reaction (6Z,9Z,12Z)-octadecatrienoyl-CoA + malonyl-CoA + H(+) = (8Z,11Z,14Z)-3-oxoeicosatrienoyl-CoA + CO2 + CoA. The catalysed reaction is (9Z,12Z,15Z)-octadecatrienoyl-CoA + malonyl-CoA + H(+) = (11Z,14Z,17Z)-3-oxoeicosatrienoyl-CoA + CO2 + CoA. It carries out the reaction (9Z)-hexadecenoyl-CoA + malonyl-CoA + H(+) = 3-oxo-(11Z)-octadecenoyl-CoA + CO2 + CoA. The enzyme catalyses (9Z)-octadecenoyl-CoA + malonyl-CoA + H(+) = 3-oxo-(11Z)-eicosenoyl-CoA + CO2 + CoA. It catalyses the reaction (11Z)-octadecenoyl-CoA + malonyl-CoA + H(+) = 3-oxo-(13Z)-eicosenoyl-CoA + CO2 + CoA. The catalysed reaction is (9Z,12Z)-octadecadienoyl-CoA + malonyl-CoA + H(+) = (11Z,14Z)-3-oxoicosa-11,14-dienoyl-CoA + CO2 + CoA. It carries out the reaction (6Z,9Z,12Z,15Z)-octadecatetraenoyl-CoA + malonyl-CoA + H(+) = (8Z,11Z,14Z,17Z)-3-oxoicosatetraenoyl-CoA + CO2 + CoA. The enzyme catalyses (5Z,8Z,11Z,14Z)-eicosatetraenoyl-CoA + malonyl-CoA + H(+) = (7Z,10Z,13Z,16Z)-3-oxodocosatetraenoyl-CoA + CO2 + CoA. It catalyses the reaction (5Z,8Z,11Z,14Z,17Z)-eicosapentaenoyl-CoA + malonyl-CoA + H(+) = 3-oxo-(7Z,10Z,13Z,16Z,19Z)-docosapentaenoyl-CoA + CO2 + CoA. Its pathway is lipid metabolism; polyunsaturated fatty acid biosynthesis. In terms of biological role, catalyzes the first and rate-limiting reaction of the four reactions that constitute the long-chain fatty acids elongation cycle. This endoplasmic reticulum-bound enzymatic process allows the addition of 2 carbons to the chain of long- and very long-chain fatty acids (VLCFAs) per cycle. Condensing enzyme that acts specifically toward polyunsaturated acyl-CoA with the higher activity toward C18:3(n-6) acyl-CoA. May participate in the production of monounsaturated and of polyunsaturated VLCFAs of different chain lengths that are involved in multiple biological processes as precursors of membrane lipids and lipid mediators. In conditions where the essential linoleic and alpha linoleic fatty acids are lacking it is also involved in the synthesis of Mead acid from oleic acid. The chain is Very long chain fatty acid elongase 5 from Homo sapiens (Human).